Reading from the N-terminus, the 103-residue chain is Large ribosomal subunit protein bL21 (103 aa).

This sequence belongs to the bacterial ribosomal protein bL21 family. As to quaternary structure, part of the 50S ribosomal subunit. Contacts protein L20.

Functionally, this protein binds to 23S rRNA in the presence of protein L20. The sequence is that of Large ribosomal subunit protein bL21 from Salmonella schwarzengrund (strain CVM19633).